We begin with the raw amino-acid sequence, 200 residues long: 3-isopropylmalate dehydratase small subunit (200 aa).

Belongs to the LeuD family. LeuD type 1 subfamily. Heterodimer of LeuC and LeuD.

The enzyme catalyses (2R,3S)-3-isopropylmalate = (2S)-2-isopropylmalate. It participates in amino-acid biosynthesis; L-leucine biosynthesis; L-leucine from 3-methyl-2-oxobutanoate: step 2/4. In terms of biological role, catalyzes the isomerization between 2-isopropylmalate and 3-isopropylmalate, via the formation of 2-isopropylmaleate. This Histophilus somni (strain 129Pt) (Haemophilus somnus) protein is 3-isopropylmalate dehydratase small subunit.